The chain runs to 513 residues: TRAF3-interacting JNK-activating modulator (513 aa).

Disordered regions lie at residues 1–96, 130–171, and 381–402; these read MISS…GQVS, SSGI…KAEE, and SLQG…QLKK. The Cytoplasmic portion of the chain corresponds to 1-485; sequence MISSDSRSSP…QLQVKENELQ (485 aa). 2 stretches are compositionally biased toward basic and acidic residues: residues 17–31 and 69–79; these read ESYE…ETRE and RNLEEEKKGQA. Residues 266–488 adopt a coiled-coil conformation; the sequence is MKKVLLEMED…VKENELQCGQ (223 aa). Polar residues predominate over residues 386–397; the sequence is GEQQSSETQDLQ. The chain crosses the membrane as a helical; Anchor for type IV membrane protein span at residues 486-506; it reads CGQWLPVLMVVIATALAVFLA. At 507–513 the chain is on the extracellular side; the sequence is NKGNLVI.

Interacts (via its coiled-coil domain) with TRAF3 (via isoleucine zipper). Interacts with MAP2K1. Interacts with PPP2CA; this interaction targets PPP2CA to the lysosomes. Interacts with MAVS. Interacts with TBK1. As to expression, expressed in bone marrow, spleen and thymus. Not detected in heart, kidney and liver.

The protein resides in the cell membrane. It is found in the golgi apparatus membrane. It localises to the lysosome membrane. The protein localises to the mitochondrion outer membrane. Adapter protein that plays essential roles in both innate and adaptive immunity. Plays a crucial role in the regulation of thymocyte development. Mechanistically, mediates TCR-stimulated activation through recruiting MAP2K1/MEK1 to the Golgi and, thereby, facilitating the interaction of MAP2K1/MEK1 with its activator BRAF. Also plays an essential role in regulatory T-cell stability and function by recruiting the serine-threonine phosphatase catalytic subunit (PPP2CA) to the lysosome, thereby facilitating the interaction of PP2Ac with the mTORC1 component RPTOR and restricting glycolytic metabolism. Positively regulates TLR4 signaling activity in macrophage-mediated inflammation by acting as a molecular clamp to facilitate LPS-induced translocation of TLR4 to lipid rafts. In response to viral infection, facilitates the recruitment of TRAF3 to MAVS within mitochondria leading to IRF3 activation and interferon production. However, participates in the maintenance of immune homeostasis and the prevention of overzealous innate immunity by promoting 'Lys-48'-dependent ubiquitination of TBK1. The chain is TRAF3-interacting JNK-activating modulator (Traf3ip3) from Mus musculus (Mouse).